Here is a 263-residue protein sequence, read N- to C-terminus: HTH-type transcriptional repressor NanR (263 aa).

The interval Met-1–Asn-21 is disordered. One can recognise an HTH gntR-type domain in the interval Lys-30–Pro-98. The H-T-H motif DNA-binding region spans Glu-58 to Ala-77.

Belongs to the NanR family.

Functionally, transcriptional repressor that controls expression of the genes required for the catabolism of sialic acids. This Escherichia coli O7:K1 (strain IAI39 / ExPEC) protein is HTH-type transcriptional repressor NanR.